Here is a 131-residue protein sequence, read N- to C-terminus: Squamosa promoter-binding protein 1 (131 aa).

Residues 1–10 (MDTSKGEGKR) show a composition bias toward basic and acidic residues. The segment at 1-52 (MDTSKGEGKRVIKLPGSQEQGEEEDDIGEDSKKTRALTPSGKRASGSTQRSC) is disordered. Residues 49 to 126 (QRSCQVENCA…AGHNERRRKS (78 aa)) form an SBP-type zinc finger. Positions 52, 57, 74, 77, 93, 96, 100, and 112 each coordinate Zn(2+). Positions 109 to 125 (KRSCRRRLAGHNERRRK) match the Bipartite nuclear localization signal motif.

The protein localises to the nucleus. In terms of biological role, probable transcriptional factor. Binds to the promoter of the SQUAMOSA gene. The sequence is that of Squamosa promoter-binding protein 1 (SBP1) from Antirrhinum majus (Garden snapdragon).